The sequence spans 334 residues: Holliday junction branch migration complex subunit RuvB (334 aa).

The tract at residues 4–184 (ADRLIQPQIQ…FGIPLRLEFY (181 aa)) is large ATPase domain (RuvB-L). ATP is bound by residues R24, G65, K68, T69, T70, 131–133 (EDY), R174, Y184, and R221. T69 provides a ligand contact to Mg(2+). Residues 185-255 (NIKDLSTIVT…VAEHALDLLD (71 aa)) form a small ATPAse domain (RuvB-S) region. Positions 258–334 (SEGFDYMDRK…YQHFELIKPE (77 aa)) are head domain (RuvB-H). 3 residues coordinate DNA: R294, R313, and R318.

The protein belongs to the RuvB family. Homohexamer. Forms an RuvA(8)-RuvB(12)-Holliday junction (HJ) complex. HJ DNA is sandwiched between 2 RuvA tetramers; dsDNA enters through RuvA and exits via RuvB. An RuvB hexamer assembles on each DNA strand where it exits the tetramer. Each RuvB hexamer is contacted by two RuvA subunits (via domain III) on 2 adjacent RuvB subunits; this complex drives branch migration. In the full resolvosome a probable DNA-RuvA(4)-RuvB(12)-RuvC(2) complex forms which resolves the HJ.

It localises to the cytoplasm. The enzyme catalyses ATP + H2O = ADP + phosphate + H(+). In terms of biological role, the RuvA-RuvB-RuvC complex processes Holliday junction (HJ) DNA during genetic recombination and DNA repair, while the RuvA-RuvB complex plays an important role in the rescue of blocked DNA replication forks via replication fork reversal (RFR). RuvA specifically binds to HJ cruciform DNA, conferring on it an open structure. The RuvB hexamer acts as an ATP-dependent pump, pulling dsDNA into and through the RuvAB complex. RuvB forms 2 homohexamers on either side of HJ DNA bound by 1 or 2 RuvA tetramers; 4 subunits per hexamer contact DNA at a time. Coordinated motions by a converter formed by DNA-disengaged RuvB subunits stimulates ATP hydrolysis and nucleotide exchange. Immobilization of the converter enables RuvB to convert the ATP-contained energy into a lever motion, pulling 2 nucleotides of DNA out of the RuvA tetramer per ATP hydrolyzed, thus driving DNA branch migration. The RuvB motors rotate together with the DNA substrate, which together with the progressing nucleotide cycle form the mechanistic basis for DNA recombination by continuous HJ branch migration. Branch migration allows RuvC to scan DNA until it finds its consensus sequence, where it cleaves and resolves cruciform DNA. In Shewanella baltica (strain OS223), this protein is Holliday junction branch migration complex subunit RuvB.